A 412-amino-acid polypeptide reads, in one-letter code: Multifunctional CCA protein (412 aa).

Positions 8 and 11 each coordinate ATP. Residues Gly8 and Arg11 each contribute to the CTP site. Mg(2+)-binding residues include Asp21 and Asp23. Residues Arg91, Arg137, and Arg140 each contribute to the ATP site. The CTP site is built by Arg91, Arg137, and Arg140. The region spanning 228-329 (TGIHTLMTLS…VKLFDSIDAW (102 aa)) is the HD domain.

It belongs to the tRNA nucleotidyltransferase/poly(A) polymerase family. Bacterial CCA-adding enzyme type 1 subfamily. In terms of assembly, monomer. Can also form homodimers and oligomers. Mg(2+) is required as a cofactor. The cofactor is Ni(2+).

The enzyme catalyses a tRNA precursor + 2 CTP + ATP = a tRNA with a 3' CCA end + 3 diphosphate. The catalysed reaction is a tRNA with a 3' CCA end + 2 CTP + ATP = a tRNA with a 3' CCACCA end + 3 diphosphate. Its function is as follows. Catalyzes the addition and repair of the essential 3'-terminal CCA sequence in tRNAs without using a nucleic acid template. Adds these three nucleotides in the order of C, C, and A to the tRNA nucleotide-73, using CTP and ATP as substrates and producing inorganic pyrophosphate. tRNA 3'-terminal CCA addition is required both for tRNA processing and repair. Also involved in tRNA surveillance by mediating tandem CCA addition to generate a CCACCA at the 3' terminus of unstable tRNAs. While stable tRNAs receive only 3'-terminal CCA, unstable tRNAs are marked with CCACCA and rapidly degraded. The sequence is that of Multifunctional CCA protein from Escherichia coli (strain SMS-3-5 / SECEC).